A 151-amino-acid polypeptide reads, in one-letter code: Cell division protein SepF (151 aa).

The tract at residues 31–53 (EEVEEPRRRSRTGVKQERETGQN) is disordered.

The protein belongs to the SepF family. As to quaternary structure, homodimer. Interacts with FtsZ.

Its subcellular location is the cytoplasm. Functionally, cell division protein that is part of the divisome complex and is recruited early to the Z-ring. Probably stimulates Z-ring formation, perhaps through the cross-linking of FtsZ protofilaments. Its function overlaps with FtsA. In Halalkalibacterium halodurans (strain ATCC BAA-125 / DSM 18197 / FERM 7344 / JCM 9153 / C-125) (Bacillus halodurans), this protein is Cell division protein SepF.